The chain runs to 172 residues: Counting factor-associated protein B (172 aa).

The signal sequence occupies residues 1–21; sequence MKLLNSLILLVLTCLVSSINT. N-linked (GlcNAc...) asparagine glycans are attached at residues asparagine 37 and asparagine 153.

It is found in the secreted. The sequence is that of Counting factor-associated protein B (cfaB) from Dictyostelium discoideum (Social amoeba).